The chain runs to 303 residues: tRNA dimethylallyltransferase 1 (303 aa).

9 to 16 (GPTASGKT) is a binding site for ATP. 11 to 16 (TASGKT) serves as a coordination point for substrate. Interaction with substrate tRNA stretches follow at residues 34–37 (DSAL), 158–162 (QRLIR), and 239–244 (RCVGYR).

It belongs to the IPP transferase family. As to quaternary structure, monomer. Requires Mg(2+) as cofactor.

The catalysed reaction is adenosine(37) in tRNA + dimethylallyl diphosphate = N(6)-dimethylallyladenosine(37) in tRNA + diphosphate. Its function is as follows. Catalyzes the transfer of a dimethylallyl group onto the adenine at position 37 in tRNAs that read codons beginning with uridine, leading to the formation of N6-(dimethylallyl)adenosine (i(6)A). The polypeptide is tRNA dimethylallyltransferase 1 (Shewanella sediminis (strain HAW-EB3)).